We begin with the raw amino-acid sequence, 146 residues long: UPF0178 protein Lin1493 (146 aa).

It belongs to the UPF0178 family.

This Listeria innocua serovar 6a (strain ATCC BAA-680 / CLIP 11262) protein is UPF0178 protein Lin1493.